The chain runs to 560 residues: Trans-activating transcriptional regulatory protein (560 aa).

The tract at residues 106–133 (DSMKRKASELDSDSDSGESSKGKKRVIK) is disordered.

The protein belongs to the nucleopolyhedrovirus IE-1 protein family.

Functionally, regulatory transcriptional protein, which trans-activates gene expression from early baculovirus promoters. Can also trans-activate its own promoter, suggesting that it is autoregulated during normal infection of insect cells. This chain is Trans-activating transcriptional regulatory protein (IE1), found in Choristoneura fumiferana nuclear polyhedrosis virus (CfMNPV).